The chain runs to 549 residues: Undecaprenyl phosphate-alpha-4-amino-4-deoxy-L-arabinose arabinosyl transferase (549 aa).

Transmembrane regions (helical) follow at residues 9–29, 80–100, 112–132, 133–153, 176–196, 204–224, 256–276, 288–308, 312–332, 346–366, 376–396, and 402–422; these read LLLI…GLWI, LFGV…LAYL, SLAC…SGYA, NLDP…WHAL, FLTK…PYML, LLGY…PWAL, PWWF…GLLP, QAPV…FSLS, LPTY…HALV, NGLL…YLQL, FELF…LAQW, and AWAA…AAMP.

Belongs to the glycosyltransferase 83 family.

The protein resides in the cell inner membrane. It catalyses the reaction 4-amino-4-deoxy-alpha-L-arabinopyranosyl di-trans,octa-cis-undecaprenyl phosphate + lipid IVA = lipid IIA + di-trans,octa-cis-undecaprenyl phosphate.. Its pathway is lipopolysaccharide metabolism; 4-amino-4-deoxy-beta-L-arabinose-lipid A biosynthesis. Catalyzes the transfer of the L-Ara4N moiety of the glycolipid undecaprenyl phosphate-alpha-L-Ara4N to lipid A. The modified arabinose is attached to lipid A and is required for resistance to polymyxin and cationic antimicrobial peptides. The sequence is that of Undecaprenyl phosphate-alpha-4-amino-4-deoxy-L-arabinose arabinosyl transferase from Pseudomonas aeruginosa (strain LESB58).